The following is a 107-amino-acid chain: DQDCLPGWSFYEGNCYKAFDEPKSWVDAEKFCQKQSNGKHLASIEGLGKANFVAKLVSEDQSETLREPQIHVWIGLRDQSERQQCSSHWTDGSAVSYECGLAYPFIC.

Cystine bridges form between Cys-4–Cys-15 and Cys-32–Cys-107. In terms of domain architecture, C-type lectin spans 11–107; that stretch reads YEGNCYKAFD…ECGLAYPFIC (97 aa).

The protein belongs to the snaclec family. Heterodimer of subunits alpha and beta; disulfide-linked. As to expression, expressed by the venom gland.

The protein resides in the secreted. Inhibits integrin alpha-2/beta-1- (ITGA2/ITGB1) dependent melanoma metastasis. The sequence is that of Snaclec VP12 subunit A from Daboia palaestinae (Palestine viper).